Here is a 93-residue protein sequence, read N- to C-terminus: Cytochrome c (93 aa).

Over residues 1-13 (AALPPGDAAAAQG) the composition is skewed to low complexity. The interval 1–21 (AALPPGDAAAAQGGSNGVGPN) is disordered. Met70 serves as a coordination point for heme c.

It belongs to the cytochrome c family. Post-translationally, binds 1 heme c group covalently per subunit.

It is found in the mitochondrion intermembrane space. Its function is as follows. Electron carrier protein. The oxidized form of the cytochrome c heme group can accept an electron from the heme group of the cytochrome c1 subunit of cytochrome reductase. Cytochrome c then transfers this electron to the cytochrome oxidase complex, the final protein carrier in the mitochondrial electron-transport chain. In Trypanosoma brucei brucei, this protein is Cytochrome c.